A 352-amino-acid chain; its full sequence is tRNA pseudouridine synthase D (352 aa).

The active-site Nucleophile is aspartate 78. In terms of domain architecture, TRUD spans 153-299; it reads GVPNYYGEQR…LDQDRRPLLL (147 aa).

It belongs to the pseudouridine synthase TruD family.

The catalysed reaction is uridine(13) in tRNA = pseudouridine(13) in tRNA. In terms of biological role, responsible for synthesis of pseudouridine from uracil-13 in transfer RNAs. The protein is tRNA pseudouridine synthase D of Aeromonas salmonicida (strain A449).